A 473-amino-acid chain; its full sequence is ATP synthase subunit beta (473 aa).

Glycine 158–threonine 165 is an ATP binding site.

It belongs to the ATPase alpha/beta chains family. In terms of assembly, F-type ATPases have 2 components, CF(1) - the catalytic core - and CF(0) - the membrane proton channel. CF(1) has five subunits: alpha(3), beta(3), gamma(1), delta(1), epsilon(1). CF(0) has three main subunits: a(1), b(2) and c(9-12). The alpha and beta chains form an alternating ring which encloses part of the gamma chain. CF(1) is attached to CF(0) by a central stalk formed by the gamma and epsilon chains, while a peripheral stalk is formed by the delta and b chains.

The protein localises to the cell membrane. The catalysed reaction is ATP + H2O + 4 H(+)(in) = ADP + phosphate + 5 H(+)(out). In terms of biological role, produces ATP from ADP in the presence of a proton gradient across the membrane. The catalytic sites are hosted primarily by the beta subunits. The protein is ATP synthase subunit beta of Bacillus velezensis (strain DSM 23117 / BGSC 10A6 / LMG 26770 / FZB42) (Bacillus amyloliquefaciens subsp. plantarum).